The sequence spans 726 residues: 1,4-alpha-glucan branching enzyme GlgB (726 aa).

Asp-407 acts as the Nucleophile in catalysis. The active-site Proton donor is Glu-460.

This sequence belongs to the glycosyl hydrolase 13 family. GlgB subfamily. As to quaternary structure, monomer.

It catalyses the reaction Transfers a segment of a (1-&gt;4)-alpha-D-glucan chain to a primary hydroxy group in a similar glucan chain.. It participates in glycan biosynthesis; glycogen biosynthesis. In terms of biological role, catalyzes the formation of the alpha-1,6-glucosidic linkages in glycogen by scission of a 1,4-alpha-linked oligosaccharide from growing alpha-1,4-glucan chains and the subsequent attachment of the oligosaccharide to the alpha-1,6 position. In Hydrogenovibrio crunogenus (strain DSM 25203 / XCL-2) (Thiomicrospira crunogena), this protein is 1,4-alpha-glucan branching enzyme GlgB.